Reading from the N-terminus, the 121-residue chain is Ribosome-binding factor A (121 aa).

It belongs to the RbfA family. Monomer. Binds 30S ribosomal subunits, but not 50S ribosomal subunits or 70S ribosomes.

The protein resides in the cytoplasm. In terms of biological role, one of several proteins that assist in the late maturation steps of the functional core of the 30S ribosomal subunit. Associates with free 30S ribosomal subunits (but not with 30S subunits that are part of 70S ribosomes or polysomes). Required for efficient processing of 16S rRNA. May interact with the 5'-terminal helix region of 16S rRNA. The sequence is that of Ribosome-binding factor A from Hydrogenovibrio crunogenus (strain DSM 25203 / XCL-2) (Thiomicrospira crunogena).